The primary structure comprises 397 residues: uncharacterized protein (397 aa).

Helical transmembrane passes span 9–29, 38–58, 85–105, 112–132, 148–168, 182–202, 226–246, 271–291, 310–330, 331–351, and 365–385; these read NAVL…GFLT, LLAS…GAQL, FLAA…VGGA, IFGI…ILIF, MGFI…PPVV, PIAI…FAGA, AILI…GVVS, VLFG…AAYT, WIIA…KPAA, VLVF…ALIL, and HPVF…ILSG.

Belongs to the NRAMP family.

It is found in the cell membrane. This is an uncharacterized protein from Haemophilus influenzae (strain ATCC 51907 / DSM 11121 / KW20 / Rd).